A 778-amino-acid polypeptide reads, in one-letter code: Endonuclease MutS2 (778 aa).

Residue 328-335 (GPNTGGKT) coordinates ATP. The region spanning 702–777 (LDLRGKRYEE…GSGATIVTFK (76 aa)) is the Smr domain.

The protein belongs to the DNA mismatch repair MutS family. MutS2 subfamily. In terms of assembly, homodimer. Binds to stalled ribosomes, contacting rRNA.

Functionally, endonuclease that is involved in the suppression of homologous recombination and thus may have a key role in the control of bacterial genetic diversity. Its function is as follows. Acts as a ribosome collision sensor, splitting the ribosome into its 2 subunits. Detects stalled/collided 70S ribosomes which it binds and splits by an ATP-hydrolysis driven conformational change. Acts upstream of the ribosome quality control system (RQC), a ribosome-associated complex that mediates the extraction of incompletely synthesized nascent chains from stalled ribosomes and their subsequent degradation. Probably generates substrates for RQC. The polypeptide is Endonuclease MutS2 (Streptococcus pneumoniae (strain P1031)).